The sequence spans 161 residues: Hydrogenase expression/formation protein HoxO (161 aa).

This sequence belongs to the HupG/HyaE family.

The protein is Hydrogenase expression/formation protein HoxO (hoxO) of Cupriavidus necator (strain ATCC 17699 / DSM 428 / KCTC 22496 / NCIMB 10442 / H16 / Stanier 337) (Ralstonia eutropha).